A 230-amino-acid polypeptide reads, in one-letter code: 5'-methylthioadenosine/S-adenosylhomocysteine nucleosidase (230 aa).

The active-site Proton acceptor is Glu-12. Substrate-binding positions include Gly-78, Met-153, and 174-175 (ME). Asp-198 functions as the Proton donor in the catalytic mechanism.

Belongs to the PNP/UDP phosphorylase family. MtnN subfamily.

It carries out the reaction S-adenosyl-L-homocysteine + H2O = S-(5-deoxy-D-ribos-5-yl)-L-homocysteine + adenine. It catalyses the reaction S-methyl-5'-thioadenosine + H2O = 5-(methylsulfanyl)-D-ribose + adenine. The enzyme catalyses 5'-deoxyadenosine + H2O = 5-deoxy-D-ribose + adenine. It functions in the pathway amino-acid biosynthesis; L-methionine biosynthesis via salvage pathway; S-methyl-5-thio-alpha-D-ribose 1-phosphate from S-methyl-5'-thioadenosine (hydrolase route): step 1/2. Catalyzes the irreversible cleavage of the glycosidic bond in both 5'-methylthioadenosine (MTA) and S-adenosylhomocysteine (SAH/AdoHcy) to adenine and the corresponding thioribose, 5'-methylthioribose and S-ribosylhomocysteine, respectively. Also cleaves 5'-deoxyadenosine, a toxic by-product of radical S-adenosylmethionine (SAM) enzymes, into 5-deoxyribose and adenine. In Lysinibacillus sphaericus (strain C3-41), this protein is 5'-methylthioadenosine/S-adenosylhomocysteine nucleosidase.